The following is a 160-amino-acid chain: MGVFNYETEATSVIPAARLFKAFILDGDNLFPKVAPQAISSVENIEGNGGPGTIKKISFPEGFPFKYVKDRVDEVDHTNFKYSYSVIEGGPVGDTLEKISNEIKIVATPNGGSILKINNKYHTKGDHEVKAEQIKASKEMGETLLRAVESYLLAHSDAYN.

4 residues coordinate brassinolide: Lys-55, Tyr-82, Tyr-84, and Asn-101. Hydrophobic ligand pocket stretches follow at residues 116–118 (KIN) and 133–141 (QIKASKEMG).

This sequence belongs to the BetVI family. As to expression, pollen.

Its subcellular location is the cytoplasm. Its function is as follows. May be a general steroid carrier protein. This Betula pendula (European white birch) protein is Major pollen allergen Bet v 1-J.